We begin with the raw amino-acid sequence, 669 residues long: DNA ligase (669 aa).

NAD(+) contacts are provided by residues 34 to 38 (DAEYD), 83 to 84 (SL), and Glu-114. The N6-AMP-lysine intermediate role is filled by Lys-116. NAD(+) is bound by residues Arg-137, Glu-171, Lys-287, and Lys-311. Positions 405, 408, 423, and 428 each coordinate Zn(2+). Residues 591-669 (NVESYFAGKT…EERFLQELNK (79 aa)) enclose the BRCT domain.

The protein belongs to the NAD-dependent DNA ligase family. LigA subfamily. The cofactor is Mg(2+). Mn(2+) serves as cofactor.

The enzyme catalyses NAD(+) + (deoxyribonucleotide)n-3'-hydroxyl + 5'-phospho-(deoxyribonucleotide)m = (deoxyribonucleotide)n+m + AMP + beta-nicotinamide D-nucleotide.. DNA ligase that catalyzes the formation of phosphodiester linkages between 5'-phosphoryl and 3'-hydroxyl groups in double-stranded DNA using NAD as a coenzyme and as the energy source for the reaction. It is essential for DNA replication and repair of damaged DNA. The polypeptide is DNA ligase (Bacillus cereus (strain 03BB102)).